A 409-amino-acid polypeptide reads, in one-letter code: Multifunctional CCA protein (409 aa).

Gly8 and Arg11 together coordinate ATP. The CTP site is built by Gly8 and Arg11. Mg(2+) is bound by residues Asp21 and Asp23. Residues Arg91, Arg137, and Arg140 each coordinate ATP. 3 residues coordinate CTP: Arg91, Arg137, and Arg140. The 102-residue stretch at 228-329 (TGIHTLMVVE…ITLMDQNDAW (102 aa)) folds into the HD domain.

This sequence belongs to the tRNA nucleotidyltransferase/poly(A) polymerase family. Bacterial CCA-adding enzyme type 1 subfamily. As to quaternary structure, monomer. Can also form homodimers and oligomers. It depends on Mg(2+) as a cofactor. Ni(2+) is required as a cofactor.

It carries out the reaction a tRNA precursor + 2 CTP + ATP = a tRNA with a 3' CCA end + 3 diphosphate. The enzyme catalyses a tRNA with a 3' CCA end + 2 CTP + ATP = a tRNA with a 3' CCACCA end + 3 diphosphate. Functionally, catalyzes the addition and repair of the essential 3'-terminal CCA sequence in tRNAs without using a nucleic acid template. Adds these three nucleotides in the order of C, C, and A to the tRNA nucleotide-73, using CTP and ATP as substrates and producing inorganic pyrophosphate. tRNA 3'-terminal CCA addition is required both for tRNA processing and repair. Also involved in tRNA surveillance by mediating tandem CCA addition to generate a CCACCA at the 3' terminus of unstable tRNAs. While stable tRNAs receive only 3'-terminal CCA, unstable tRNAs are marked with CCACCA and rapidly degraded. The sequence is that of Multifunctional CCA protein from Psychromonas ingrahamii (strain DSM 17664 / CCUG 51855 / 37).